Reading from the N-terminus, the 614-residue chain is BTB/POZ domain-containing protein At5g48800 (614 aa).

Residues 43–111 enclose the BTB domain; that stretch reads SDITIEVNGG…CYGINFEITS (69 aa). An NPH3 domain is found at 219 to 484; the sequence is DWWIEDLSVL…VQVLYFEQLK (266 aa). Position 425 is a phosphotyrosine (tyrosine 425). 2 disordered regions span residues 492–525 and 583–614; these read SYSD…KDNY and GHSS…ASTD. A compositionally biased stretch (polar residues) spans 507–521; sequence SWRINSGALSATMSP. Residues 522-562 adopt a coiled-coil conformation; that stretch reads KDNYASLRRENRELKLELARLRMRLNDLEKEHICMKRDMQR. The span at 583 to 597 shows a compositional bias: low complexity; that stretch reads GHSSSRGSSSPSKQS.

It belongs to the NPH3 family.

Its pathway is protein modification; protein ubiquitination. Functionally, may act as a substrate-specific adapter of an E3 ubiquitin-protein ligase complex (CUL3-RBX1-BTB) which mediates the ubiquitination and subsequent proteasomal degradation of target proteins. This Arabidopsis thaliana (Mouse-ear cress) protein is BTB/POZ domain-containing protein At5g48800.